Consider the following 362-residue polypeptide: DNA replication and repair protein RecF (362 aa).

30–37 is a binding site for ATP; it reads GLNAQGKS.

Belongs to the RecF family.

Its subcellular location is the cytoplasm. Its function is as follows. The RecF protein is involved in DNA metabolism; it is required for DNA replication and normal SOS inducibility. RecF binds preferentially to single-stranded, linear DNA. It also seems to bind ATP. In Thermoanaerobacter pseudethanolicus (strain ATCC 33223 / 39E) (Clostridium thermohydrosulfuricum), this protein is DNA replication and repair protein RecF.